A 512-amino-acid chain; its full sequence is Putative ribose/galactose/methyl galactoside import ATP-binding protein 1 (512 aa).

2 ABC transporter domains span residues 14 to 251 (IALT…VGRQ) and 262 to 507 (TSAN…TQRE). Residue 46–53 (GENGAGKS) participates in ATP binding.

This sequence belongs to the ABC transporter superfamily. Carbohydrate importer 2 (CUT2) (TC 3.A.1.2) family.

Its subcellular location is the cell inner membrane. The enzyme catalyses D-ribose(out) + ATP + H2O = D-ribose(in) + ADP + phosphate + H(+). It carries out the reaction D-galactose(out) + ATP + H2O = D-galactose(in) + ADP + phosphate + H(+). Functionally, part of an ABC transporter complex involved in carbohydrate import. Could be involved in ribose, galactose and/or methyl galactoside import. Responsible for energy coupling to the transport system. The polypeptide is Putative ribose/galactose/methyl galactoside import ATP-binding protein 1 (Burkholderia lata (strain ATCC 17760 / DSM 23089 / LMG 22485 / NCIMB 9086 / R18194 / 383)).